We begin with the raw amino-acid sequence, 620 residues long: MIEERDLVLSNGIHCIADIHSELYARLKKESQAVTPWVYQKQYGKFVTYFVAVIIFLSLIKKLAFMYYDSSEEFLPEKKNSPTTPSVFLARIMTKLVAFNRYICYRKFPTLIFSYLGIPTSVGTFLVVMATTLYTLLYCFVPHPFYRPCAGFGSPPLSVRAGIMAISLVSFVFSLSGKINVIGWLVGLSYEKINIYHQWASILCLFFSWVHVIPFLRQARHEGGYERMHQRWKASDMWRSGVPPILFLNLLWLSSLPIARRHFYEIFLQLHWILAVGFYISLFYHVYPELNSHMYLVATIVVWFAQLFYRLAVKGYLRPGRSFMASTIANVSIVGEGCVELIVKDVDMAYSPGQHIFVRTIDKDIISNHPFSIFPSAKYPGGIKMLIRAQKGFSKRLYESNDDMKKILIDGPYGGIERDIRSFTNVYLICSGSGISTCLPFLQKYGPILHKTNLEVITLDWVVRHREDISWIRDEICTLSNNLRQLFLDGTIVVRIYVCSDSTVPGIIKTFPQTADTASDQSDLAKREKDTEFGQDDTESNSTFDKSNNEYKGLITIIPSKPDLNQVINDYQIGFRNCFICSGSDSLRYTVGNSVAGLQAKVFSNKNVEECYLHSESFGY.

Topologically, residues 1-45 (MIEERDLVLSNGIHCIADIHSELYARLKKESQAVTPWVYQKQYGK) are extracellular. The helical transmembrane segment at 46 to 66 (FVTYFVAVIIFLSLIKKLAFM) threads the bilayer. Residues 67-107 (YYDSSEEFLPEKKNSPTTPSVFLARIMTKLVAFNRYICYRK) lie on the Cytoplasmic side of the membrane. Residues 108-128 (FPTLIFSYLGIPTSVGTFLVV) traverse the membrane as a helical segment. Residues 129–167 (MATTLYTLLYCFVPHPFYRPCAGFGSPPLSVRAGIMAIS) lie on the Extracellular side of the membrane. Residues 161 to 320 (AGIMAISLVS…LAVKGYLRPG (160 aa)) enclose the Ferric oxidoreductase domain. Residues 168 to 188 (LVSFVFSLSGKINVIGWLVGL) form a helical membrane-spanning segment. Topologically, residues 189-194 (SYEKIN) are cytoplasmic. The chain crosses the membrane as a helical span at residues 195-215 (IYHQWASILCLFFSWVHVIPF). The heme site is built by H197 and H211. The Extracellular segment spans residues 216 to 237 (LRQARHEGGYERMHQRWKASDM). Residues 238 to 258 (WRSGVPPILFLNLLWLSSLPI) traverse the membrane as a helical segment. Topologically, residues 259-265 (ARRHFYE) are cytoplasmic. A helical membrane pass occupies residues 266-286 (IFLQLHWILAVGFYISLFYHV). Heme-binding residues include H271 and H285. Residues 287–292 (YPELNS) are Extracellular-facing. A helical transmembrane segment spans residues 293 to 313 (HMYLVATIVVWFAQLFYRLAV). At 314-620 (KGYLRPGRSF…CYLHSESFGY (307 aa)) the chain is on the cytoplasmic side. One can recognise an FAD-binding FR-type domain in the interval 321–419 (RSFMASTIAN…DGPYGGIERD (99 aa)). 369–375 (HPFSIFP) serves as a coordination point for FAD. Positions 519-544 (SDQSDLAKREKDTEFGQDDTESNSTF) are disordered. The segment covering 523–532 (DLAKREKDTE) has biased composition (basic and acidic residues).

Belongs to the ferric reductase (FRE) family. Requires FAD as cofactor.

The protein localises to the cell membrane. The catalysed reaction is 2 a Fe(II)-siderophore + NADP(+) + H(+) = 2 a Fe(III)-siderophore + NADPH. In terms of biological role, cell surface metalloreductase. May be involved in copper homeostasis. This Saccharomyces cerevisiae (strain YJM789) (Baker's yeast) protein is Ferric/cupric reductase transmembrane component 7 (FRE7).